The sequence spans 620 residues: MSPQRDRTNAFYKDNPHPKGSRIVINREHLMIDRPYVLLAILFVMFLSLIGLLAIAGIRLHQAAIHTAEIHKSLSTNLDVTNSIEHQVKDVLTPLFKIIGDEVGLRTPQRFTDLVKFISDKIKFLNPDREYDFRDLNWCINPPERIKLDYDQYCADVAAEELMNALVNSTLLETRTTNQFLAVSKGNCSGPTTIRGQFSNMSTSLLDLYLSRGYNVSSIVTMTSQGMYGGTYLVEKPNLSSKRSELSQLSMYRVFEVGVIRNPGLGAPVFHMTNYFEQPVSNDLSNCMVALGEFKLAALCHREDSITIPYQGSGKGVSFQLVNLGVWKSPTDMQSWIPLSTDDPVIDRLYLSSHRGVIADNQAKWAVPTTRTDDKLRMETCFQQACKGKIQALCENPEWAPLKDNRIPSYGVLSVDLSPTVELKIKIASGFGPLITHGSGMDLYKSNHNNVYWLTIPPMKNLALGVINTLEWIPRFKVSPNLFTVPIKEAGKDCHAPTYLPAEVDGDVKLSSNLVILPGQDLQYVLATYDTSRVEHAVVYYVYSPGRSFSYFYPFRLPIRGVPIELQVECFTWDQKLWCRHFCVLANSESGGHITHSGMVGMGVSCTVTREDGTNRRQSC.

Topologically, residues Met1–Val37 are intravirion. Positions Met1–Cys154 are stalk. Residues Leu38–Ile58 form a helical; Signal-anchor for type II membrane protein membrane-spanning segment. Residues Arg59–Cys620 are Virion surface-facing. Asn168, Asn187, Asn200, Asn215, and Asn238 each carry an N-linked (GlcNAc...) asparagine; by host glycan. Disulfide bonds link Cys188-Cys606, Cys287-Cys300, Cys381-Cys494, Cys386-Cys394, and Cys570-Cys579. The segment at Pro458–Tyr543 is interaction with host NECTIN4 receptor.

This sequence belongs to the paramyxoviruses hemagglutinin-neuraminidase family. Non-sialidase subfamily. In terms of assembly, homodimer; disulfide-linked. Further forms homotetramer (dimer of dimers). Interacts (via C-terminus) with human NECTIN4 (via N-terminus); this interaction allows attachment to the respiratory epithelium and viral entry. Interacts (via C-terminus) with human SLAMF1/CD150 (via N-terminus); this interaction allows attachment and viral entry into the CD150-expressing immune cells.

It is found in the virion membrane. Its subcellular location is the host cell membrane. In terms of biological role, attaches the virus to the human SLAMF1/CD150 receptor for entry into host dendritic cells, macrophages, activated memory T cells and naive or memory B cells, thereby explaining the long immunosuppression that follows infection. In the respiratory airways, binds to the NECTIN4 receptor for entry into the host cell. Binding of H protein to the receptor induces a conformational change that allows the F protein to trigger virion/cell membranes fusion. This is Hemagglutinin glycoprotein (H) from Homo sapiens (Human).